Reading from the N-terminus, the 320-residue chain is HPr kinase/phosphorylase (320 aa).

Active-site residues include His-139 and Lys-160. Residue 154-161 (GDSGVGKS) coordinates ATP. Residue Ser-161 participates in Mg(2+) binding. Residue Asp-178 is the Proton acceptor; for phosphorylation activity. Proton donor; for dephosphorylation activity of the active site. Residues 202–211 (MEIRGIGIID) form an important for the catalytic mechanism of both phosphorylation and dephosphorylation region. Glu-203 provides a ligand contact to Mg(2+). Residue Arg-244 is part of the active site. The segment at 265-270 (PVKTGR) is important for the catalytic mechanism of dephosphorylation.

This sequence belongs to the HPrK/P family. In terms of assembly, homohexamer. The cofactor is Mg(2+).

The catalysed reaction is [HPr protein]-L-serine + ATP = [HPr protein]-O-phospho-L-serine + ADP + H(+). It carries out the reaction [HPr protein]-O-phospho-L-serine + phosphate + H(+) = [HPr protein]-L-serine + diphosphate. Its function is as follows. Catalyzes the ATP- as well as the pyrophosphate-dependent phosphorylation of a specific serine residue in HPr, a phosphocarrier protein of the phosphoenolpyruvate-dependent sugar phosphotransferase system (PTS). HprK/P also catalyzes the pyrophosphate-producing, inorganic phosphate-dependent dephosphorylation (phosphorolysis) of seryl-phosphorylated HPr (P-Ser-HPr). The two antagonistic activities of HprK/P are regulated by several intracellular metabolites, which change their concentration in response to the absence or presence of rapidly metabolisable carbon sources (glucose, fructose, etc.) in the growth medium. Therefore, by controlling the phosphorylation state of HPr, HPrK/P is a sensor enzyme that plays a major role in the regulation of carbon metabolism and sugar transport: it mediates carbon catabolite repression (CCR), and regulates PTS-catalyzed carbohydrate uptake and inducer exclusion. The polypeptide is HPr kinase/phosphorylase (Limosilactobacillus reuteri (strain DSM 20016) (Lactobacillus reuteri)).